The following is a 313-amino-acid chain: Carbamate kinase (313 aa).

The protein belongs to the carbamate kinase family.

It is found in the cytoplasm. It catalyses the reaction hydrogencarbonate + NH4(+) + ATP = carbamoyl phosphate + ADP + H2O + H(+). The protein operates within metabolic intermediate metabolism; carbamoyl phosphate degradation; CO(2) and NH(3) from carbamoyl phosphate: step 1/1. This Oenococcus oeni (Leuconostoc oenos) protein is Carbamate kinase (arcC).